A 309-amino-acid chain; its full sequence is Probable cell wall protein PGA50 (309 aa).

The signal sequence occupies residues 1 to 17; that stretch reads MKLNLLLLLFIVELVAA. Asn-67, Asn-115, Asn-248, Asn-267, and Asn-277 each carry an N-linked (GlcNAc...) asparagine glycan. The interval 241–281 is disordered; the sequence is STTTFSSNGTSSGTTNGDTRAETKSSNSTQTSSSDKNSSQI. Ser-286 is lipidated: GPI-anchor amidated serine. Positions 287 to 309 are cleaved as a propeptide — removed in mature form; it reads TGVANFVASFGMGTLLLFVLSLC.

This sequence belongs to the IHD1 family. In terms of processing, the GPI-anchor is attached to the protein in the endoplasmic reticulum and serves to target the protein to the cell surface. There, the glucosamine-inositol phospholipid moiety is cleaved off and the GPI-modified mannoprotein is covalently attached via its lipidless GPI glycan remnant to the 1,6-beta-glucan of the outer cell wall layer.

It is found in the secreted. The protein localises to the cell wall. It localises to the membrane. In terms of biological role, probable GPI-anchored cell wall protein that may be involved in cell wall organization, hyphal growth, as well as in virulence. The chain is Probable cell wall protein PGA50 (PGA50) from Candida albicans (strain SC5314 / ATCC MYA-2876) (Yeast).